The primary structure comprises 79 residues: RNA-binding protein KhpA (79 aa).

A KH domain is found at 32–79; sequence TVVIELRVDPAELGKVIGKQGRIARALRTILTAIGRKIGKRVVLEILE.

It belongs to the KhpA RNA-binding protein family.

The protein localises to the cytoplasm. A probable RNA-binding protein. The chain is RNA-binding protein KhpA from Aquifex aeolicus (strain VF5).